A 704-amino-acid polypeptide reads, in one-letter code: Polyribonucleotide nucleotidyltransferase (704 aa).

Residues Asp485 and Asp491 each contribute to the Mg(2+) site. The KH domain occupies 552 to 611 (PKILTMTINPDKIRDVIGPSGKMINKIIEDTGVKIDIEQDGTIYISSADTNMNNKAREII). One can recognise an S1 motif domain in the interval 621-689 (GQMYLGTVKR…NQGRVNLSRK (69 aa)).

This sequence belongs to the polyribonucleotide nucleotidyltransferase family. Mg(2+) is required as a cofactor.

It is found in the cytoplasm. It catalyses the reaction RNA(n+1) + phosphate = RNA(n) + a ribonucleoside 5'-diphosphate. In terms of biological role, involved in mRNA degradation. Catalyzes the phosphorolysis of single-stranded polyribonucleotides processively in the 3'- to 5'-direction. This is Polyribonucleotide nucleotidyltransferase from Halalkalibacterium halodurans (strain ATCC BAA-125 / DSM 18197 / FERM 7344 / JCM 9153 / C-125) (Bacillus halodurans).